A 323-amino-acid polypeptide reads, in one-letter code: Aldo-keto reductase family 1 member C4 (323 aa).

NADP(+)-binding positions include 20–24 (GFGTY) and D50. The active-site Proton donor is Y55. H117 lines the substrate pocket. NADP(+) contacts are provided by residues 166–167 (SN), Q190, 216–221 (HSALGT), and 270–280 (KSYNEQRIREN).

Belongs to the aldo/keto reductase family. Monomer. The N-terminus is blocked. As to expression, liver specific.

Its subcellular location is the cytoplasm. The protein localises to the cytosol. It carries out the reaction a 3alpha-hydroxysteroid + NADP(+) = a 3-oxosteroid + NADPH + H(+). It catalyses the reaction a 3alpha-hydroxysteroid + NAD(+) = a 3-oxosteroid + NADH + H(+). The catalysed reaction is 5alpha-androstane-3alpha,17beta-diol + NADP(+) = 17beta-hydroxy-5alpha-androstan-3-one + NADPH + H(+). The enzyme catalyses 5alpha-androstane-3beta,17beta-diol + NADP(+) = 17beta-hydroxy-5alpha-androstan-3-one + NADPH + H(+). It carries out the reaction 5alpha-androstane-3alpha,17beta-diol + NAD(+) = 17beta-hydroxy-5alpha-androstan-3-one + NADH + H(+). It catalyses the reaction 17beta-estradiol + NADP(+) = estrone + NADPH + H(+). The catalysed reaction is 17beta-estradiol + NAD(+) = estrone + NADH + H(+). The enzyme catalyses (20S)-hydroxypregn-4-en-3-one + NADP(+) = progesterone + NADPH + H(+). It carries out the reaction (20S)-hydroxypregn-4-en-3-one + NAD(+) = progesterone + NADH + H(+). It catalyses the reaction androsterone + NADP(+) = 5alpha-androstan-3,17-dione + NADPH + H(+). The catalysed reaction is testosterone + NADP(+) = androst-4-ene-3,17-dione + NADPH + H(+). The enzyme catalyses testosterone + NAD(+) = androst-4-ene-3,17-dione + NADH + H(+). It carries out the reaction 3alpha-hydroxy-5alpha-androstane 17-O-(beta-D-glucuronate) + NADP(+) = 5alpha-dihydrotestosterone 17-O-(beta-D-glucuronate) + NADPH + H(+). It catalyses the reaction (3beta,5alpha,17beta)-3-hydroxy-androstan-17-yl sulfate + NADP(+) = 5alpha-dihydrotestosterone sulfate + NADPH + H(+). The catalysed reaction is 5alpha-androstane-3alpha,17beta-diol + NAD(+) = androsterone + NADH + H(+). The enzyme catalyses chlordecone alcohol + NADP(+) = chlordecone + NADPH + H(+). It functions in the pathway steroid metabolism. With respect to regulation, inhibited by nonsteroidal the anti-inflammatory drugs (NSAID) flufenamic. The oxidation reaction is inhibited by low micromolar concentrations of NADPH. Cytosolic aldo-keto reductase that catalyzes the NADH and NADPH-dependent reduction of ketosteroids to hydroxysteroids. Liver specific enzyme that acts as an NAD(P)(H)-dependent 3-, 17- and 20-ketosteroid reductase on the steroid nucleus and side chain. Displays the ability to catalyze both oxidation and reduction in vitro, but most probably acts as a reductase in vivo since the oxidase activity measured in vitro is inhibited by physiological concentration of NADPH. Acts preferentially as a 3-alpha-hydroxysteroid dehydrogenase (HSD) with a subsidiary 3-beta-HSD activity. Catalyzes efficiently the transformation of the potent androgen 5-alpha-dihydrotestosterone (5alpha-DHT or 17beta-hydroxy-5alpha-androstan-3-one) into the less active form, 5-alpha-androstan-3-alpha,17-beta-diol (3-alpha-diol). Catalyzes the reduction of estrone into 17beta-estradiol but with low efficiency. Metabolizes a broad spectrum of natural and synthetic therapeutic steroid and plays an important role in metabolism of androgens, estrogens, progestereone and conjugated steroids. Catalyzes the biotransformation of the pesticide chlordecone (kepone) to its corresponding alcohol leading to increased biliary excretion of the pesticide and concomitant reduction of its neurotoxicity since bile is the major excretory route. This chain is Aldo-keto reductase family 1 member C4 (AKR1C4), found in Homo sapiens (Human).